The following is a 317-amino-acid chain: MATH domain and coiled-coil domain-containing protein At3g58240 (317 aa).

The 126-residue stretch at 6–131 (DNKFTWVIKN…DGEVEIVAQI (126 aa)) folds into the MATH domain. Residues 254-305 (KLDWLEKKLDEVKEIKKKCERVTEMEKELHDLMNKHTNVSKLLEKEKLEIKN) are a coiled coil.

The polypeptide is MATH domain and coiled-coil domain-containing protein At3g58240 (Arabidopsis thaliana (Mouse-ear cress)).